Here is a 652-residue protein sequence, read N- to C-terminus: tRNA 5-methylaminomethyl-2-thiouridine biosynthesis bifunctional protein MnmC (652 aa).

A tRNA (mnm(5)s(2)U34)-methyltransferase region spans residues 1–235 (MPDRLVPATL…EPALRVGEYA (235 aa)). Positions 259–652 (IGAGLAGCAV…IRALRGRQIG (394 aa)) are FAD-dependent cmnm(5)s(2)U34 oxidoreductase.

It in the N-terminal section; belongs to the methyltransferase superfamily. tRNA (mnm(5)s(2)U34)-methyltransferase family. In the C-terminal section; belongs to the DAO family. It depends on FAD as a cofactor.

Its subcellular location is the cytoplasm. It catalyses the reaction 5-aminomethyl-2-thiouridine(34) in tRNA + S-adenosyl-L-methionine = 5-methylaminomethyl-2-thiouridine(34) in tRNA + S-adenosyl-L-homocysteine + H(+). In terms of biological role, catalyzes the last two steps in the biosynthesis of 5-methylaminomethyl-2-thiouridine (mnm(5)s(2)U) at the wobble position (U34) in tRNA. Catalyzes the FAD-dependent demodification of cmnm(5)s(2)U34 to nm(5)s(2)U34, followed by the transfer of a methyl group from S-adenosyl-L-methionine to nm(5)s(2)U34, to form mnm(5)s(2)U34. The sequence is that of tRNA 5-methylaminomethyl-2-thiouridine biosynthesis bifunctional protein MnmC from Burkholderia ambifaria (strain MC40-6).